The following is a 374-amino-acid chain: UPF0754 membrane protein SA1664 (374 aa).

2 helical membrane-spanning segments follow: residues 4–24 and 354–374; these read LFII…TNVI and SLGF…AIFV.

This sequence belongs to the UPF0754 family.

The protein localises to the cell membrane. The chain is UPF0754 membrane protein SA1664 from Staphylococcus aureus (strain N315).